A 491-amino-acid polypeptide reads, in one-letter code: Probable V-type proton ATPase subunit B 1 (491 aa).

R380 is an ATP binding site.

Belongs to the ATPase alpha/beta chains family. V-ATPase is a heteromultimeric enzyme made up of two complexes: the ATP-hydrolytic V1 complex and the proton translocation V0 complex. The V1 complex consists of three catalytic AB heterodimers that form a heterohexamer, three peripheral stalks each consisting of EG heterodimers, one central rotor including subunits D and F, and the regulatory subunits C and H. The proton translocation complex V0 consists of the proton transport subunit a, a ring of proteolipid subunits c9c'', rotary subunit d, subunits e and f, and the accessory subunits vah-19/Ac45 and vah-20/PRR.

Its function is as follows. Non-catalytic subunit of the V1 complex of vacuolar(H+)-ATPase (V-ATPase), a multisubunit enzyme composed of a peripheral complex (V1) that hydrolyzes ATP and a membrane integral complex (V0) that translocates protons. V-ATPase is responsible for acidifying and maintaining the pH of intracellular compartments and in some cell types, is targeted to the plasma membrane, where it is responsible for acidifying the extracellular environment. Essential for the proper assembly and activity of V-ATPase. Required maternally for early embryogenesis and zygotically during morphogenesis. Specifically, involved in the clearance of apoptotic cell corpses in embryos. Also, during embryonic development, the V-ATPase is required to repress fusion of epidermal cells probably by negatively regulating eff-1-mediated cell fusion. In neurons, required for necrotic cell death by promoting intracellular acidification. Required for cell death induced by hypoxia. Required for acidification of synaptic vesicles and the release of neurotransmitters from adult neurons. This chain is Probable V-type proton ATPase subunit B 1, found in Caenorhabditis briggsae.